The primary structure comprises 103 residues: Large ribosomal subunit protein bL21 (103 aa).

It belongs to the bacterial ribosomal protein bL21 family. In terms of assembly, part of the 50S ribosomal subunit. Contacts protein L20.

Functionally, this protein binds to 23S rRNA in the presence of protein L20. This chain is Large ribosomal subunit protein bL21, found in Idiomarina loihiensis (strain ATCC BAA-735 / DSM 15497 / L2-TR).